Reading from the N-terminus, the 71-residue chain is Small ribosomal subunit protein eS17 (71 aa).

This sequence belongs to the eukaryotic ribosomal protein eS17 family.

This is Small ribosomal subunit protein eS17 from Pyrobaculum islandicum (strain DSM 4184 / JCM 9189 / GEO3).